A 1173-amino-acid polypeptide reads, in one-letter code: Pyruvate-flavodoxin oxidoreductase (1173 aa).

4Fe-4S ferredoxin-type domains are found at residues 681-710 (NVPV…PVLI) and 735-766 (YRLA…MQPL). [4Fe-4S] cluster contacts are provided by Cys690, Cys693, Cys696, Cys700, Cys744, Cys747, Cys750, Cys754, Cys810, Cys813, and Cys838. The span at 922–933 (GEGTRERAEKVG) shows a compositional bias: basic and acidic residues. The segment at 922–946 (GEGTRERAEKVGDTSGFANAREKSR) is disordered. Position 1075 (Cys1075) interacts with [4Fe-4S] cluster.

The protein belongs to the pyruvate:ferredoxin/flavodoxin oxidoreductase family. The cofactor is [4Fe-4S] cluster.

The enzyme catalyses oxidized [flavodoxin] + pyruvate + CoA + 2 H(+) = reduced [flavodoxin] + acetyl-CoA + CO2. Oxidoreductase required for the transfer of electrons from pyruvate to flavodoxin, which reduces nitrogenase. In Enterobacter agglomerans (Erwinia herbicola), this protein is Pyruvate-flavodoxin oxidoreductase (nifJ).